Consider the following 101-residue polypeptide: Large ribosomal subunit protein uL24 (101 aa).

The protein belongs to the universal ribosomal protein uL24 family. In terms of assembly, part of the 50S ribosomal subunit.

One of two assembly initiator proteins, it binds directly to the 5'-end of the 23S rRNA, where it nucleates assembly of the 50S subunit. In terms of biological role, one of the proteins that surrounds the polypeptide exit tunnel on the outside of the subunit. The chain is Large ribosomal subunit protein uL24 from Streptococcus thermophilus (strain ATCC BAA-491 / LMD-9).